Consider the following 797-residue polypeptide: N-acetylneuraminate (7)9-O-acetyltransferase (797 aa).

The Cytoplasmic segment spans residues 1–18; it reads MAALAYNLGKREINHYFS. A helical transmembrane segment spans residues 19–39; that stretch reads VRSAKVLALVAVLLLAACHLA. The Lumenal segment spans residues 40–313; it reads SRRYRGNDSC…QPRPPVTLIQ (274 aa). Asn46 is a glycosylation site (N-linked (GlcNAc...) asparagine). The Acyl-ester intermediate role is filled by Ser94. 2 N-linked (GlcNAc...) asparagine glycosylation sites follow: Asn175 and Asn187. Residues Asp270 and His273 contribute to the active site. A helical transmembrane segment spans residues 314-334; that stretch reads KLAACFFTLSIIGYLIFYIIH. Over 335 to 363 the chain is Cytoplasmic; sequence RNAHRKNKPCTDLESGEEKKNIINTPVSS. Residues 364–384 form a helical membrane-spanning segment; the sequence is LEILLQSFCKLGLIMAYFYMC. Residues 385–395 lie on the Lumenal side of the membrane; the sequence is DRANLFMKENK. The helical transmembrane segment at 396–416 threads the bilayer; it reads FYTHSSFFIPIIYILVLGVFY. At 417-439 the chain is on the cytoplasmic side; sequence NENTKETKVLNREQTDEWKGWMQ. The helical transmembrane segment at 440–460 threads the bilayer; it reads LVILIYHISGASTFLPVYMHI. A topological domain (lumenal) is located at residue Arg461. A helical membrane pass occupies residues 462–482; sequence VLVAAYLFQTGYGHFSYFWIK. Residues 483–486 lie on the Cytoplasmic side of the membrane; the sequence is GDFG. A helical transmembrane segment spans residues 487–507; it reads IYRVCQVLFRLNFLVVVLCIV. Over 508 to 513 the chain is Lumenal; it reads MDRPYQ. A helical transmembrane segment spans residues 514–534; sequence FYYFVPLVTVWFMVIYVTLAL. At 535–547 the chain is on the cytoplasmic side; the sequence is WPQIIQKKANGNC. A helical membrane pass occupies residues 548–568; that stretch reads FWHFGLLLKLGFLLLFICFLA. The Lumenal segment spans residues 569–605; that stretch reads YSQGAFEKIFSLWPLSKCFELKGNVYEWWFRWRLDRY. A helical membrane pass occupies residues 606-626; sequence VVFHGMLFAFIYLALQKRQIL. Residues 627–638 are Cytoplasmic-facing; that stretch reads SEGKGEPLFSNK. The chain crosses the membrane as a helical span at residues 639–659; it reads ISNFLLFISVVSFLTYSIWAS. The Lumenal segment spans residues 660–671; it reads SCKNKAECNELH. Residues 672–692 traverse the membrane as a helical segment; sequence PSVSVVQILAFILIRNIPGYA. The Cytoplasmic segment spans residues 693–698; sequence RSVYSS. The helical transmembrane segment at 699-719 threads the bilayer; it reads FFAWFGKISLELFICQYHIWL. At 720-725 the chain is on the lumenal side; that stretch reads AADTRG. A helical transmembrane segment spans residues 726–746; that stretch reads ILVLIPGNPMLNIIVSTFIFV. The Cytoplasmic segment spans residues 747–770; that stretch reads CVAHEISQITNDLAQIIIPKDNSS. A helical membrane pass occupies residues 771 to 791; that stretch reads LLKRLACIAAFFCGLLILSSI. Residues 792-797 are Lumenal-facing; sequence QDKSKH.

This sequence belongs to the PC-esterase family. CASD1 subfamily. N-glycosylated. In terms of tissue distribution, highly expressed in peripheral B lymphocytes.

It localises to the golgi apparatus membrane. The enzyme catalyses CMP-N-acetyl-beta-neuraminate + acetyl-CoA = CMP-N-acetyl-9-O-acetyl-beta-neuraminate + CoA. It catalyses the reaction a ganglioside GD3 (d18:1(4E)) + acetyl-CoA = a ganglioside Ac-O-7-GD3(d18:1(4E)) + CoA. It carries out the reaction CMP-N-acetyl-beta-neuraminate + acetyl-CoA = CMP-N-acetyl-7-O-acetyl-beta-neuraminate + CoA. Functionally, key enzyme in the biosynthesis of O-acetylated (O-Ac) sialoglycans such as gangliosides O-AcGD3 and O-AcGD2, which affect various processes such as cell-cell interactions, host-pathogen recognition. Catalyzes the transfer of an acetyl group from a donor, the acetyl-coenzyme-A molecule (acetyl-CoA), to the C7/8/9 OH-position of a sialic acid residue. The primary site of O-acetyl group transfer on sialic acid seems to depend on cell type and can be C7, from which the O-acetyl group could subsequently migrate to the C8 and then to the C9 position, or at C9 with possibility of migrating to the C8 and then to the C7 position. Together with ST8SIA1 (GD3 synthase) it increases the levels of ganglioside Ac-O-7-GD3. Can transfer the acetyl group from acetyl-CoA to free sialate (N-acetylneuraminate, Neu5Ac) in vitro, but has preferred substrate specificity for CMP-activated sialate (CMP-Neu5Ac), resulting in the formation of 9-O-acetylated CMP-Neu5Ac (CMP-Neu5,9Ac2). CMP-Neu5,9Ac2 may be used by sialyltransferases as a sialate donor for glycoconjugate acceptors such as ganglioside GD3. O-acetylation at position C9 of ganglioside GD3 can counteract the pro-apoptotic effects of the ganglioside GD3 in tumor cells. The sequence is that of N-acetylneuraminate (7)9-O-acetyltransferase from Homo sapiens (Human).